We begin with the raw amino-acid sequence, 825 residues long: Transcription regulator galc (825 aa).

The tract at residues 60–102 (RPGPYPYQSSSSSSRELSGSAAKVAIPRTTSASSQSQRRRSAR) is disordered. Positions 68 to 79 (SSSSSSRELSGS) are enriched in low complexity. Positions 104–131 (CEPCRQRKIKCDGSKPVCRQCIDHNVSC) form a DNA-binding region, zn(2)-C6 fungal-type. Residues 239-251 (DEAKSRNRKKEDS) are compositionally biased toward basic and acidic residues. Disordered regions lie at residues 239–267 (DEAK…MTPP), 642–663 (APGD…SRRI), and 804–825 (HLRD…ERHH).

Its subcellular location is the nucleus. In terms of biological role, transcription factor that negatively regulates the biosynthesis of ochratoxin A (OTA), a mycotoxin composed of a chlorinated type I polyketide dihydroisocoumarin moiety linked to L-phenylalanine, and demonstrated to have nephrotoxic, immunotoxic, genotoxic, neurotoxic, and teratogenic properties. Also regulates cellular redox homeostasis and sensitivity to H(2)O(2). Carbon sources such as sucrose, glucose and arabinose repress gal4, leading to up-regulation of OTA biosynthetic genes and altered cellular redox homeostasis. In Aspergillus niger (strain ATCC MYA-4892 / CBS 513.88 / FGSC A1513), this protein is Transcription regulator galc.